The chain runs to 170 residues: Ribosome maturation factor RimM (170 aa).

The region spanning 98–170 is the PRC barrel domain; sequence PDEYYWVDLE…RIVVDWDPEF (73 aa).

Belongs to the RimM family. As to quaternary structure, binds ribosomal protein uS19.

The protein localises to the cytoplasm. An accessory protein needed during the final step in the assembly of 30S ribosomal subunit, possibly for assembly of the head region. Essential for efficient processing of 16S rRNA. May be needed both before and after RbfA during the maturation of 16S rRNA. It has affinity for free ribosomal 30S subunits but not for 70S ribosomes. This is Ribosome maturation factor RimM from Xylella fastidiosa (strain 9a5c).